The primary structure comprises 190 residues: dCTP deaminase (190 aa).

DCTP-binding positions include 111-116 (KSTYAR), 135-137 (TLE), Q156, Y172, and Q182. E137 serves as the catalytic Proton donor/acceptor.

Belongs to the dCTP deaminase family. Homotrimer.

The catalysed reaction is dCTP + H2O + H(+) = dUTP + NH4(+). Its pathway is pyrimidine metabolism; dUMP biosynthesis; dUMP from dCTP (dUTP route): step 1/2. Functionally, catalyzes the deamination of dCTP to dUTP. This chain is dCTP deaminase, found in Stenotrophomonas maltophilia (strain R551-3).